The primary structure comprises 495 residues: Glutamate--tRNA ligase (495 aa).

Positions 13-23 (PSPTGTPHVGL) match the 'HIGH' region motif. Positions 257-261 (KLSKR) match the 'KMSKS' region motif. Lys260 provides a ligand contact to ATP.

The protein belongs to the class-I aminoacyl-tRNA synthetase family. Glutamate--tRNA ligase type 1 subfamily. As to quaternary structure, monomer.

It localises to the cytoplasm. The enzyme catalyses tRNA(Glu) + L-glutamate + ATP = L-glutamyl-tRNA(Glu) + AMP + diphosphate. Its function is as follows. Catalyzes the attachment of glutamate to tRNA(Glu) in a two-step reaction: glutamate is first activated by ATP to form Glu-AMP and then transferred to the acceptor end of tRNA(Glu). This chain is Glutamate--tRNA ligase, found in Mycolicibacterium vanbaalenii (strain DSM 7251 / JCM 13017 / BCRC 16820 / KCTC 9966 / NRRL B-24157 / PYR-1) (Mycobacterium vanbaalenii).